A 115-amino-acid polypeptide reads, in one-letter code: MSLDPAIAARLKRNEAGLVAAVAQERATGDVLMMAWMDDEALARTLATRKATYYSRSRQQYWVKGETSGHTQYVHEVRLDCDGDTVLLIVDQEGAACHTGTHTCWDGDVLLAEPA.

Residue Asp80 coordinates Mg(2+). Cys81 is a Zn(2+) binding site. 2 residues coordinate Mg(2+): Asp82 and Asp84. The Zn(2+) site is built by Cys97 and Cys104.

The protein belongs to the PRA-CH family. As to quaternary structure, homodimer. Requires Mg(2+) as cofactor. Zn(2+) is required as a cofactor.

It localises to the cytoplasm. The enzyme catalyses 1-(5-phospho-beta-D-ribosyl)-5'-AMP + H2O = 1-(5-phospho-beta-D-ribosyl)-5-[(5-phospho-beta-D-ribosylamino)methylideneamino]imidazole-4-carboxamide. It participates in amino-acid biosynthesis; L-histidine biosynthesis; L-histidine from 5-phospho-alpha-D-ribose 1-diphosphate: step 3/9. Its function is as follows. Catalyzes the hydrolysis of the adenine ring of phosphoribosyl-AMP. The chain is Phosphoribosyl-AMP cyclohydrolase from Nocardia farcinica (strain IFM 10152).